Here is a 482-residue protein sequence, read N- to C-terminus: Glycogen synthase 2 (482 aa).

ADP-alpha-D-glucose is bound at residue Lys18.

It belongs to the glycosyltransferase 1 family. Bacterial/plant glycogen synthase subfamily.

It catalyses the reaction [(1-&gt;4)-alpha-D-glucosyl](n) + ADP-alpha-D-glucose = [(1-&gt;4)-alpha-D-glucosyl](n+1) + ADP + H(+). Its pathway is glycan biosynthesis; glycogen biosynthesis. In terms of biological role, synthesizes alpha-1,4-glucan chains using ADP-glucose. The polypeptide is Glycogen synthase 2 (Bradyrhizobium diazoefficiens (strain JCM 10833 / BCRC 13528 / IAM 13628 / NBRC 14792 / USDA 110)).